The primary structure comprises 86 residues: MKEGIHPNYREVVFQDMSCDFSFITRSTIQTKDTIVKDGKEYPLAKIEVSSESHPFYTGTQKIMDTAGRVEKFRQKFGSKLGKVAK.

Belongs to the bacterial ribosomal protein bL31 family. Type B subfamily. In terms of assembly, part of the 50S ribosomal subunit.

This Cupriavidus pinatubonensis (strain JMP 134 / LMG 1197) (Cupriavidus necator (strain JMP 134)) protein is Large ribosomal subunit protein bL31B.